The following is a 67-amino-acid chain: ECENTECPRACPGEYEFDEDGCNTCVCKGCDDAQCRCSSDANGCESFCTCNTRCSAADECNPRCTCK.

The Antistasin-like domain maps to 2–27 (CENTECPRACPGEYEFDEDGCNTCVC).

Homodimer. Post-translationally, eight disulfide bonds are present.

The protein localises to the secreted. Its function is as follows. Potent thrombin-specific inhibitor. The protein is Theromin of Theromyzon tessulatum (Duck leech).